The chain runs to 508 residues: MGLPWYRVHTVVLNDPGRLLSVHIMHTALVAGWAGSMALYELAVFDPSDPVLDPMWRQGMFVIPFMTRLGITNSWGGWSITGGTITNPGIWSYEGVAGAHIVFSGLCFLAAIWHWVYWDLEIFCDERTGKPSLDLPKIFGIHLFLAGLACFGFGAFHVTGLYGPGIWVSDPYGLTGKVQSVNPSWGVEGFDPFVPGGIASHHIAAGTLGILAGLFHLSVRPPQRLYKGLRMGNIETVLSSSIAAVFFAAFVVAGTMWYGSATTPIELFGPTRYQWDQGYFQQEIYRRVSAGLAENQSLSEVWSKIPEKLAFYDYIGNNPAKGGLFRAGSMDNGDGIAVGWLGHPIFRDKEGRELFVRRMPTFFETFPVVLVDGDGIVRADVPFRRAESKYSVEQVGVTVEFYGGELNGVSYSDPVTVKKYARRAQLGEIFELDRATLKSDGVFRSSPRGWFTFGHASFALLFFFGHIWHGSRTLFRDVFAGIDPDLDAQVEFGAFQKLGDPTTRRQAI.

6 helical membrane passes run 21 to 36 (SVHIMHTALVAGWAGS), 101 to 115 (IVFSGLCFLAAIWHW), 140 to 156 (GIHLFLAGLACFGFGAF), 203 to 218 (IAAGTLGILAGLFHLS), 237 to 252 (VLSSSIAAVFFAAFVV), and 457 to 472 (SFALLFFFGHIWHGSR).

The protein belongs to the PsbB/PsbC family. PsbB subfamily. PSII is composed of 1 copy each of membrane proteins PsbA, PsbB, PsbC, PsbD, PsbE, PsbF, PsbH, PsbI, PsbJ, PsbK, PsbL, PsbM, PsbT, PsbX, PsbY, PsbZ, Psb30/Ycf12, at least 3 peripheral proteins of the oxygen-evolving complex and a large number of cofactors. It forms dimeric complexes. The cofactor is Binds multiple chlorophylls. PSII binds additional chlorophylls, carotenoids and specific lipids..

Its subcellular location is the plastid. The protein localises to the chloroplast thylakoid membrane. In terms of biological role, one of the components of the core complex of photosystem II (PSII). It binds chlorophyll and helps catalyze the primary light-induced photochemical processes of PSII. PSII is a light-driven water:plastoquinone oxidoreductase, using light energy to abstract electrons from H(2)O, generating O(2) and a proton gradient subsequently used for ATP formation. The protein is Photosystem II CP47 reaction center protein of Helianthus annuus (Common sunflower).